A 132-amino-acid chain; its full sequence is Small ribosomal subunit protein uS11 (132 aa).

The protein belongs to the universal ribosomal protein uS11 family. In terms of assembly, part of the 30S ribosomal subunit. Interacts with proteins S7 and S18. Binds to IF-3.

Located on the platform of the 30S subunit, it bridges several disparate RNA helices of the 16S rRNA. Forms part of the Shine-Dalgarno cleft in the 70S ribosome. This chain is Small ribosomal subunit protein uS11, found in Oenococcus oeni (strain ATCC BAA-331 / PSU-1).